The primary structure comprises 370 residues: Holliday junction branch migration complex subunit RuvB (370 aa).

The segment at 1-53 is disordered; sequence MAILSSQKQPLEPEPSKNPQSVQQPGLPPSTPEQGLLTAEVSPEERLSRTDDI. Residues 13–214 form a large ATPase domain (RuvB-L) region; that stretch reads PEPSKNPQSV…FGLIQRLRFY (202 aa). Basic and acidic residues predominate over residues 43–53; the sequence is PEERLSRTDDI. Residues Ile-53, Arg-54, Gly-95, Lys-98, Thr-99, Thr-100, 161–163, Arg-204, Tyr-214, and Arg-251 contribute to the ATP site; that span reads EDF. Position 99 (Thr-99) interacts with Mg(2+). The tract at residues 215 to 285 is small ATPAse domain (RuvB-S); that stretch reads EPEELSQIIL…IASEALQLFN (71 aa). The tract at residues 288-370 is head domain (RuvB-H); that stretch reads PCGLDWTDRR…TPPDGQLSLL (83 aa). Positions 343 and 348 each coordinate DNA.

The protein belongs to the RuvB family. As to quaternary structure, homohexamer. Forms an RuvA(8)-RuvB(12)-Holliday junction (HJ) complex. HJ DNA is sandwiched between 2 RuvA tetramers; dsDNA enters through RuvA and exits via RuvB. An RuvB hexamer assembles on each DNA strand where it exits the tetramer. Each RuvB hexamer is contacted by two RuvA subunits (via domain III) on 2 adjacent RuvB subunits; this complex drives branch migration. In the full resolvosome a probable DNA-RuvA(4)-RuvB(12)-RuvC(2) complex forms which resolves the HJ.

Its subcellular location is the cytoplasm. It carries out the reaction ATP + H2O = ADP + phosphate + H(+). In terms of biological role, the RuvA-RuvB-RuvC complex processes Holliday junction (HJ) DNA during genetic recombination and DNA repair, while the RuvA-RuvB complex plays an important role in the rescue of blocked DNA replication forks via replication fork reversal (RFR). RuvA specifically binds to HJ cruciform DNA, conferring on it an open structure. The RuvB hexamer acts as an ATP-dependent pump, pulling dsDNA into and through the RuvAB complex. RuvB forms 2 homohexamers on either side of HJ DNA bound by 1 or 2 RuvA tetramers; 4 subunits per hexamer contact DNA at a time. Coordinated motions by a converter formed by DNA-disengaged RuvB subunits stimulates ATP hydrolysis and nucleotide exchange. Immobilization of the converter enables RuvB to convert the ATP-contained energy into a lever motion, pulling 2 nucleotides of DNA out of the RuvA tetramer per ATP hydrolyzed, thus driving DNA branch migration. The RuvB motors rotate together with the DNA substrate, which together with the progressing nucleotide cycle form the mechanistic basis for DNA recombination by continuous HJ branch migration. Branch migration allows RuvC to scan DNA until it finds its consensus sequence, where it cleaves and resolves cruciform DNA. The sequence is that of Holliday junction branch migration complex subunit RuvB from Cyanothece sp. (strain PCC 7425 / ATCC 29141).